The chain runs to 215 residues: Nucleoredoxin-like protein 1 (215 aa).

The 164-residue stretch at 1–164 folds into the Thioredoxin; atypical domain; it reads MVDLFLGKVL…GAELIDRNFM (164 aa). The disordered stretch occupies residues 190–215; sequence DEKKKKKKRDDDDDDDDGGGGGGPWG.

This sequence belongs to the nucleoredoxin family.

It is found in the cell projection. The protein localises to the cilium. Its subcellular location is the photoreceptor outer segment. In terms of biological role, plays an important role in retinal cone photoreceptor survival. May play a role in cone cell viability, slowing down cone degeneration, does not seem to play a role in degenerating rods. This chain is Nucleoredoxin-like protein 1 (nxnl1), found in Danio rerio (Zebrafish).